Consider the following 430-residue polypeptide: MELAYMAKLPKEEFEERRTRVFAQMQPNSALLLFSEIEKRRNNDCTYPFRQDSYFWYLTGFNEPNAALLLLKTEQVEKAIIFLRPRDPLLETWNGRRLGVERAPQQLNVNEAYSIEEFATVLPKILKNLTALYHVPEIHTWGDTLVSESAVNFSEILDWRPMLSEMRLIKSPNEIRLMQQAGQITALGHIKAMQTTRPNRFEYEIESDILHEFNRHCARFPSYNSIVAGGSNACILHYTENDRPLNDGDLVLIDAGCEFAMYAGDITRTFPVNGKFSQPQREIYELVLKAQKRAIELLVPGNSIKQANDEVIRIKTQGLVDLGILKGDVDTLIEQQAYRQFYMHGLGHWLGLDVHDVGSYGQDKQRILEIGMVITVEPGIYISEDADVPEQYKGIGVRIEDNLLMTEYGNKILTAAVPKEIADIENLMNF.

Residues Asp-254, Asp-265, His-348, Glu-377, and Glu-400 each coordinate Mn(2+).

Belongs to the peptidase M24B family. As to quaternary structure, homotetramer. Mn(2+) serves as cofactor.

It catalyses the reaction Release of any N-terminal amino acid, including proline, that is linked to proline, even from a dipeptide or tripeptide.. This Haemophilus influenzae (strain ATCC 51907 / DSM 11121 / KW20 / Rd) protein is Xaa-Pro aminopeptidase (pepP).